We begin with the raw amino-acid sequence, 275 residues long: Polyamine aminopropyltransferase (275 aa).

Residues 2–235 (DLWLREGQIE…GFWSFTIGSK (234 aa)) form the PABS domain. Residue Q31 participates in S-methyl-5'-thioadenosine binding. The spermidine site is built by H62 and D86. S-methyl-5'-thioadenosine-binding positions include E106 and 137–138 (DG). Catalysis depends on D155, which acts as the Proton acceptor. A spermidine-binding site is contributed by 155–158 (DSTD).

Belongs to the spermidine/spermine synthase family. As to quaternary structure, homodimer or homotetramer.

The protein localises to the cytoplasm. The catalysed reaction is S-adenosyl 3-(methylsulfanyl)propylamine + putrescine = S-methyl-5'-thioadenosine + spermidine + H(+). It participates in amine and polyamine biosynthesis; spermidine biosynthesis; spermidine from putrescine: step 1/1. Its function is as follows. Catalyzes the irreversible transfer of a propylamine group from the amino donor S-adenosylmethioninamine (decarboxy-AdoMet) to putrescine (1,4-diaminobutane) to yield spermidine. This Clostridium kluyveri (strain NBRC 12016) protein is Polyamine aminopropyltransferase.